We begin with the raw amino-acid sequence, 405 residues long: ATP-sensitive inward rectifier potassium channel 15 (405 aa).

Over 1 to 90 the chain is Cytoplasmic; it reads MVARWVKGSE…LQDLWTTVID (90 aa). A helical transmembrane segment spans residues 91–117; that stretch reads MKWRYKLTLFAATFVMTWFLFGVVYYA. Over 118–143 the chain is Extracellular; that stretch reads IAFIHGDLELGESNSNHTPCIMKVDS. Residues 144–160 constitute an intramembrane region (helical; Pore-forming); it reads LTGAFLFSLESQTTIGY. The Selectivity filter motif lies at 157 to 162; it reads TIGYGV. Over 161-169 the chain is Extracellular; that stretch reads GVRSITEEC. The helical transmembrane segment at 170-195 threads the bilayer; that stretch reads PHAIFLLVAQLVITTLIEIFITGTFL. Residues 196–405 are Cytoplasmic-facing; it reads AKIARPKKRA…RSLLLQQSNV (210 aa).

The protein belongs to the inward rectifier-type potassium channel (TC 1.A.2.1) family. KCNJ15 subfamily. In terms of assembly, can form heteromultimeric channels with Kir5.1/KCNJ16. Interacts with PATJ.

Its subcellular location is the membrane. It localises to the cell membrane. The catalysed reaction is K(+)(in) = K(+)(out). Channel activity is regulated by variations of cytosolic pH; reversibly inhibited by acidic pH values. Inhibited by Ba(2+) and Cs(+) in a voltage-dependent manner. In terms of biological role, inward rectifier potassium channels are characterized by a greater tendency to allow potassium to flow into the cell rather than out of it. Their voltage dependence is regulated by the concentration of extracellular potassium; as external potassium is raised, the voltage range of the channel opening shifts to more positive voltages. The inward rectification is mainly due to the blockage of outward current by internal magnesium. The protein is ATP-sensitive inward rectifier potassium channel 15 (Kcnj15) of Rattus norvegicus (Rat).